Here is a 208-residue protein sequence, read N- to C-terminus: 3-demethoxyubiquinol 3-hydroxylase (208 aa).

Fe cation-binding residues include E57, E87, H90, E139, E171, and H174.

Belongs to the COQ7 family. Fe cation serves as cofactor.

It is found in the cell membrane. The catalysed reaction is a 5-methoxy-2-methyl-3-(all-trans-polyprenyl)benzene-1,4-diol + AH2 + O2 = a 3-demethylubiquinol + A + H2O. Its pathway is cofactor biosynthesis; ubiquinone biosynthesis. Its function is as follows. Catalyzes the hydroxylation of 2-nonaprenyl-3-methyl-6-methoxy-1,4-benzoquinol during ubiquinone biosynthesis. This chain is 3-demethoxyubiquinol 3-hydroxylase, found in Burkholderia ambifaria (strain MC40-6).